Consider the following 339-residue polypeptide: Mycothiol acetyltransferase (339 aa).

N-acetyltransferase domains lie at Tyr-8–Thr-174 and Leu-176–Asn-339. A 1D-myo-inositol 2-(L-cysteinylamino)-2-deoxy-alpha-D-glucopyranoside-binding site is contributed by Glu-39. Leu-85–Val-87 serves as a coordination point for acetyl-CoA. Residues Glu-207, Lys-254, and Glu-270 each contribute to the 1D-myo-inositol 2-(L-cysteinylamino)-2-deoxy-alpha-D-glucopyranoside site. Val-274–Leu-276 is a binding site for acetyl-CoA. Residue Tyr-308 participates in 1D-myo-inositol 2-(L-cysteinylamino)-2-deoxy-alpha-D-glucopyranoside binding.

Belongs to the acetyltransferase family. MshD subfamily. In terms of assembly, monomer.

It catalyses the reaction 1D-myo-inositol 2-(L-cysteinylamino)-2-deoxy-alpha-D-glucopyranoside + acetyl-CoA = mycothiol + CoA + H(+). Functionally, catalyzes the transfer of acetyl from acetyl-CoA to desacetylmycothiol (Cys-GlcN-Ins) to form mycothiol. This is Mycothiol acetyltransferase from Corynebacterium urealyticum (strain ATCC 43042 / DSM 7109).